Here is a 101-residue protein sequence, read N- to C-terminus: Small ribosomal subunit protein uS14 (101 aa).

The protein belongs to the universal ribosomal protein uS14 family. As to quaternary structure, part of the 30S ribosomal subunit. Contacts proteins S3 and S10.

In terms of biological role, binds 16S rRNA, required for the assembly of 30S particles and may also be responsible for determining the conformation of the 16S rRNA at the A site. The sequence is that of Small ribosomal subunit protein uS14 from Shewanella baltica (strain OS155 / ATCC BAA-1091).